We begin with the raw amino-acid sequence, 280 residues long: uncharacterized protein (280 aa).

Basic and acidic residues-rich tracts occupy residues glutamate 110 to glutamine 122, alanine 167 to arginine 177, alanine 223 to glutamine 261, and aspartate 269 to glutamate 280. 3 disordered regions span residues glutamate 110 to histidine 137, histidine 151 to arginine 177, and threonine 219 to glutamate 280.

This is an uncharacterized protein from Agrobacterium vitis (Rhizobium vitis).